Reading from the N-terminus, the 228-residue chain is uncharacterized protein (228 aa).

Residues 1-15 (MKQKYLFIASMALAG) form the signal peptide. A lipid anchor (N-palmitoyl cysteine) is attached at Cys-16. Cys-16 is lipidated: S-diacylglycerol cysteine.

To P.multocida PM0015.

The protein resides in the cell membrane. This is an uncharacterized protein from Pasteurella multocida (strain Pm70).